The chain runs to 385 residues: uncharacterized protein (385 aa).

It belongs to the mimivirus L17x/L18x family.

This is an uncharacterized protein from Acanthamoeba polyphaga mimivirus (APMV).